Here is a 145-residue protein sequence, read N- to C-terminus: tRNA-specific adenosine deaminase (145 aa).

One can recognise a CMP/dCMP-type deaminase domain in the interval 1 to 116; the sequence is MREALKQAEI…SNLRYFNSKA (116 aa). His48 contacts Zn(2+). Glu50 (proton donor) is an active-site residue. Residues Cys78 and Cys81 each contribute to the Zn(2+) site.

This sequence belongs to the cytidine and deoxycytidylate deaminase family. In terms of assembly, homodimer. Requires Zn(2+) as cofactor.

The enzyme catalyses adenosine(34) in tRNA + H2O + H(+) = inosine(34) in tRNA + NH4(+). Catalyzes the deamination of adenosine to inosine at the wobble position 34 of tRNA(Arg2). The chain is tRNA-specific adenosine deaminase from Rickettsia bellii (strain RML369-C).